The sequence spans 243 residues: tRNA (guanine-N(1)-)-methyltransferase (243 aa).

S-adenosyl-L-methionine-binding positions include Gly108 and 127–132 (LGDFVL).

The protein belongs to the RNA methyltransferase TrmD family. As to quaternary structure, homodimer.

The protein localises to the cytoplasm. It catalyses the reaction guanosine(37) in tRNA + S-adenosyl-L-methionine = N(1)-methylguanosine(37) in tRNA + S-adenosyl-L-homocysteine + H(+). Its function is as follows. Specifically methylates guanosine-37 in various tRNAs. In Streptococcus equi subsp. zooepidemicus (strain H70), this protein is tRNA (guanine-N(1)-)-methyltransferase.